A 499-amino-acid chain; its full sequence is Potassium voltage-gated channel subfamily A member 2 (499 aa).

The segment at 1–26 is disordered; it reads MTVATEDPADEAAALPGHPQDTYDPE. A tetramerization domain region spans residues 1–125; the sequence is MTVATEDPAD…YELGEEAMEM (125 aa). Topologically, residues 1-160 are cytoplasmic; sequence MTVATEDPAD…LLFEYPESSG (160 aa). A helical transmembrane segment spans residues 161-182; that stretch reads PARIIAIVSVMVILISIVSFCL. The Extracellular segment spans residues 183–221; sequence ETLPIFRDENEDMHGSGMTFHTYSNSTAGYQQSTSFTDP. Asn-207 carries an N-linked (GlcNAc...) asparagine glycan. The helical transmembrane segment at 222–243 threads the bilayer; that stretch reads FFIVETLCIIWFSFEFLVRFFA. Residue Cys-244 is the site of S-palmitoyl cysteine attachment. Residues 244-254 lie on the Cytoplasmic side of the membrane; sequence CPSKAGFFTNI. Residues 255–275 form a helical membrane-spanning segment; the sequence is MNIIDIVAIIPYFITLGTELA. Topologically, residues 276–289 are extracellular; the sequence is EKPEDAQQGQQAMS. The chain crosses the membrane as a helical; Voltage-sensor span at residues 290–310; it reads LAILRVIRLVRVFRIFKLSRH. At 311–325 the chain is on the cytoplasmic side; sequence SKGLQILGQTLKASM. The interval 312–325 is S4-S5 linker; that stretch reads KGLQILGQTLKASM. Residues 326–347 form a helical membrane-spanning segment; sequence RELGLLIFFLFIGVILFSSAVY. The Extracellular portion of the chain corresponds to 348–361; the sequence is FAEADERDSQFPSI. An intramembrane region (helical) is located at residues 362-373; that stretch reads PDAFWWAVVSMT. The short motif at 374–379 is the Selectivity filter element; the sequence is TVGYGD. An intramembrane segment occupies 374-381; sequence TVGYGDMV. The Extracellular portion of the chain corresponds to 382 to 388; it reads PTTIGGK. Residues 389–417 form a helical membrane-spanning segment; sequence IVGSLCAIAGVLTIALPVPVIVSNFNYFY. Over 418–499 the chain is Cytoplasmic; it reads HRETEGEEQA…VNITKMLTDV (82 aa). A Phosphotyrosine modification is found at Tyr-429. Ser-434, Ser-440, Ser-441, and Ser-449 each carry phosphoserine. Position 458 is a phosphotyrosine (Tyr-458). Ser-468 carries the post-translational modification Phosphoserine. Positions 497 to 499 match the PDZ-binding motif; that stretch reads TDV.

The protein belongs to the potassium channel family. A (Shaker) (TC 1.A.1.2) subfamily. Kv1.2/KCNA2 sub-subfamily. Homotetramer and heterotetramer with other channel-forming alpha subunits, such as KCNA1, KCNA4, KCNA5, KCNA6 and KCNA7. Channel activity is regulated by interaction with the beta subunits, including KCNAB1 and KCNAB2. Identified in a complex with KCNA1 and KCNAB2. Identified in a complex with KCNA4 and FYN. Identified in a complex with KCNA5 and KCNAB1. Interacts with the beta subunit KCNAB1. Interacts with PTK2B. Interacts (via C-terminus) with CTTN. Interacts (via N-terminal cytoplasmic domain) with RHOA (GTP-bound form); this regulates channel activity by reducing location at the cell surface in response to CHRM1 activation. Interacts with DRD2. Interacts with SIGMAR1; cocaine consumption leads to increased interaction. Interacts with ADAM22. Interacts with CNTNAP2. Interacts (via C-terminus) with the PDZ domains of DLG1, DLG2 and DLG4. Interacts with ADAM11. Interacts with LYNX1. Phosphorylated on tyrosine residues; phosphorylation increases in response to ischemia. Phosphorylated on tyrosine residues by activated PTK2B/PYK2. Phosphorylation on tyrosine residues suppresses ion channel activity. Phosphorylated on tyrosine residues in response to CHRM1 activation; this abolishes interaction with CTTN. This is probably due to endocytosis of the phosphorylated channel subunits. Phosphorylated on serine residues in response to increased cAMP levels; phosphorylation is apparently not catalyzed by PKA. In terms of processing, N-glycosylated, with complex, sialylated N-glycans. Detected in portal vein myocytes (at protein level). Detected in portal vein. Brain, liver and kidney.

It is found in the cell membrane. Its subcellular location is the membrane. The protein resides in the cell projection. It localises to the axon. The protein localises to the synapse. It is found in the presynaptic cell membrane. Its subcellular location is the synaptosome. The protein resides in the endoplasmic reticulum membrane. It localises to the dendrite. The protein localises to the lamellipodium membrane. It is found in the cell junction. Its subcellular location is the paranodal septate junction. The enzyme catalyses K(+)(in) = K(+)(out). Inhibited by 4-aminopyridine (4-AP). Inhibited by dendrotoxin (DTX) and charybdotoxin (CTX), but not by tetraethylammonium (TEA). Inhibited by tityustoxin-K alpha (TsTX-Kalpha), a toxin that is highly specific for KCNA2. Inhibited by maurotoxin. Inhibited by kappaM conotoxins kappaM-RIIIJ and kappaM-RIIIK. Functionally, voltage-gated potassium channel that mediates transmembrane potassium transport in excitable membranes, primarily in the brain and the central nervous system, but also in the cardiovascular system. Prevents aberrant action potential firing and regulates neuronal output. Forms tetrameric potassium-selective channels through which potassium ions pass in accordance with their electrochemical gradient. The channel alternates between opened and closed conformations in response to the voltage difference across the membrane. Can form functional homotetrameric channels and heterotetrameric channels that contain variable proportions of KCNA1, KCNA2, KCNA4, KCNA5, KCNA6, KCNA7, and possibly other family members as well; channel properties depend on the type of alpha subunits that are part of the channel. Channel properties are modulated by cytoplasmic beta subunits that regulate the subcellular location of the alpha subunits and promote rapid inactivation of delayed rectifier potassium channels. In vivo, membranes probably contain a mixture of heteromeric potassium channel complexes, making it difficult to assign currents observed in intact tissues to any particular potassium channel family member. Homotetrameric KCNA2 forms a delayed-rectifier potassium channel that opens in response to membrane depolarization, followed by slow spontaneous channel closure. In contrast, a heteromultimer formed by KCNA2 and KCNA4 shows rapid inactivation. Regulates neuronal excitability and plays a role as pacemaker in the regulation of neuronal action potentials. KCNA2-containing channels play a presynaptic role and prevent hyperexcitability and aberrant action potential firing. Response to toxins that are selective for KCNA2-containing potassium channels suggests that in Purkinje cells, dendritic subthreshold KCNA2-containing potassium channels prevent random spontaneous calcium spikes, suppressing dendritic hyperexcitability without hindering the generation of somatic action potentials, and thereby play an important role in motor coordination. Plays a role in the induction of long-term potentiation of neuron excitability in the CA3 layer of the hippocampus. May function as down-stream effector for G protein-coupled receptors and inhibit GABAergic inputs to basolateral amygdala neurons. May contribute to the regulation of neurotransmitter release, such as gamma-aminobutyric acid (GABA). Contributes to the regulation of the axonal release of the neurotransmitter dopamine. Reduced KCNA2 expression plays a role in the perception of neuropathic pain after peripheral nerve injury, but not acute pain. Plays a role in the regulation of the time spent in non-rapid eye movement (NREM) sleep. This is Potassium voltage-gated channel subfamily A member 2 (KCNA2) from Oryctolagus cuniculus (Rabbit).